An 82-amino-acid chain; its full sequence is Protein C14 (82 aa).

The sequence is that of Protein C14 from Homo sapiens (Human).